A 101-amino-acid chain; its full sequence is Thylakoid-associated protein slr0729 (101 aa).

It localises to the cellular thylakoid membrane. The chain is Thylakoid-associated protein slr0729 from Synechocystis sp. (strain ATCC 27184 / PCC 6803 / Kazusa).